We begin with the raw amino-acid sequence, 286 residues long: Beta-lactamase TEM (286 aa).

The first 23 residues, 1 to 23 (MSIQHFRVALIPFFAAFCLPVFA), serve as a signal peptide directing secretion. Ser68 acts as the Acyl-ester intermediate in catalysis. The cysteines at positions 75 and 121 are disulfide-linked. The Proton acceptor role is filled by Glu166. 232–234 (KSG) is a binding site for substrate.

This sequence belongs to the class-A beta-lactamase family.

It carries out the reaction a beta-lactam + H2O = a substituted beta-amino acid. Its function is as follows. TEM-type are the most prevalent beta-lactamases in enterobacteria; they hydrolyze the beta-lactam bond in susceptible beta-lactam antibiotics, thus conferring resistance to penicillins and cephalosporins. TEM-3 and TEM-4 are capable of hydrolyzing cefotaxime and ceftazidime. TEM-5 is capable of hydrolyzing ceftazidime. TEM-6 is capable of hydrolyzing ceftazidime and aztreonam. TEM-8/CAZ-2, TEM-16/CAZ-7 and TEM-24/CAZ-6 are markedly active against ceftazidime. IRT-4 shows resistance to beta-lactamase inhibitors. This chain is Beta-lactamase TEM (bla), found in Escherichia coli.